Consider the following 70-residue polypeptide: Large ribosomal subunit protein bL28 (70 aa).

The segment at 1–26 is disordered; sequence MAKRCEVCGKAPRSGNTVSHSDKKSG.

It belongs to the bacterial ribosomal protein bL28 family.

The chain is Large ribosomal subunit protein bL28 (rpmB) from Thermotoga maritima (strain ATCC 43589 / DSM 3109 / JCM 10099 / NBRC 100826 / MSB8).